An 89-amino-acid polypeptide reads, in one-letter code: Small ribosomal subunit protein uS15 (89 aa).

This sequence belongs to the universal ribosomal protein uS15 family. Part of the 30S ribosomal subunit. Forms a bridge to the 50S subunit in the 70S ribosome, contacting the 23S rRNA.

One of the primary rRNA binding proteins, it binds directly to 16S rRNA where it helps nucleate assembly of the platform of the 30S subunit by binding and bridging several RNA helices of the 16S rRNA. Functionally, forms an intersubunit bridge (bridge B4) with the 23S rRNA of the 50S subunit in the ribosome. The protein is Small ribosomal subunit protein uS15 of Methylorubrum extorquens (strain CM4 / NCIMB 13688) (Methylobacterium extorquens).